We begin with the raw amino-acid sequence, 662 residues long: Transketolase (662 aa).

His28 is a binding site for substrate. Residues His68 and 115–117 contribute to the thiamine diphosphate site; that span reads GPL. Residue Asp156 coordinates Mg(2+). Residues Gly157 and Asn186 each contribute to the thiamine diphosphate site. Mg(2+)-binding residues include Asn186 and Ile188. His261, Arg356, and Ser383 together coordinate substrate. His261 serves as a coordination point for thiamine diphosphate. Glu410 acts as the Proton donor in catalysis. Residue Phe436 coordinates thiamine diphosphate. Residues His460, Asp468, and Arg519 each coordinate substrate.

The protein belongs to the transketolase family. Homodimer. Mg(2+) is required as a cofactor. Ca(2+) serves as cofactor. It depends on Mn(2+) as a cofactor. The cofactor is Co(2+). Requires thiamine diphosphate as cofactor.

The catalysed reaction is D-sedoheptulose 7-phosphate + D-glyceraldehyde 3-phosphate = aldehydo-D-ribose 5-phosphate + D-xylulose 5-phosphate. Its pathway is carbohydrate biosynthesis; Calvin cycle. It participates in carbohydrate degradation; pentose phosphate pathway. Catalyzes the transfer of a two-carbon ketol group from a ketose donor to an aldose acceptor, via a covalent intermediate with the cofactor thiamine pyrophosphate. The polypeptide is Transketolase (tkt) (Staphylococcus aureus (strain COL)).